The primary structure comprises 450 residues: Trigger factor (450 aa).

The PPIase FKBP-type domain maps to 161–246 (GDRVVIDFKG…VKTVEAPEYP (86 aa)). Residues 422–450 (PMSLQELMSPQQPEAESAEGESKQDETKE) are disordered. Over residues 441-450 (GESKQDETKE) the composition is skewed to basic and acidic residues.

It belongs to the FKBP-type PPIase family. Tig subfamily.

Its subcellular location is the cytoplasm. The catalysed reaction is [protein]-peptidylproline (omega=180) = [protein]-peptidylproline (omega=0). Involved in protein export. Acts as a chaperone by maintaining the newly synthesized protein in an open conformation. Functions as a peptidyl-prolyl cis-trans isomerase. The polypeptide is Trigger factor (Alkalilimnicola ehrlichii (strain ATCC BAA-1101 / DSM 17681 / MLHE-1)).